A 3255-amino-acid chain; its full sequence is Genome polyprotein (3255 aa).

The region spanning V292–Y437 is the Peptidase S30 domain. Catalysis depends on for P1 proteinase activity residues H345, D354, and S388. Residues K489–C492 carry the Involved in interaction with stylet and aphid transmission motif. Positions P747–K749 match the Involved in virions binding and aphid transmission motif. Residues M773–G895 enclose the Peptidase C6 domain. Residues C781 and H854 each act as for helper component proteinase activity in the active site. In terms of domain architecture, Helicase ATP-binding spans E1397–E1549. An ATP-binding site is contributed by G1410 to S1417. The short motif at D1499 to H1502 is the DECH box element. The Helicase C-terminal domain maps to D1568–S1727. The short motif at E2062 to K2069 is the Nuclear localization signal element. Position 2084 is an O-(5'-phospho-RNA)-tyrosine (Y2084). The Peptidase C4 domain occupies S2215–N2433. Active-site for nuclear inclusion protein A activity residues include H2260, D2295, and C2365. The region spanning W2699–L2823 is the RdRp catalytic domain. Residues T2980 to G3027 form a disordered region. The span at K2989–I3005 shows a compositional bias: basic and acidic residues.

The protein belongs to the potyviridae genome polyprotein family. In terms of assembly, interacts with host eIF4E protein (via cap-binding region); this interaction mediates the translation of the VPg-viral RNA conjugates. Part of a complex that comprises VPg, RNA, host EIF4E and EIF4G; this interaction mediates the translation of the VPg-viral RNA conjugates. In terms of processing, VPg is uridylylated by the polymerase and is covalently attached to the 5'-end of the genomic RNA. This uridylylated form acts as a nucleotide-peptide primer for the polymerase. Post-translationally, potyviral RNA is expressed as two polyproteins which undergo post-translational proteolytic processing. Genome polyprotein is processed by NIa-pro, P1 and HC-pro proteinases resulting in the production of at least ten individual proteins. P3N-PIPO polyprotein is cleaved by P1 and HC-pro proteinases resulting in the production of three individual proteins. The P1 proteinase and the HC-pro cleave only their respective C-termini autocatalytically. 6K1 is essential for proper proteolytic separation of P3 from CI.

Its subcellular location is the host cytoplasmic vesicle. The protein resides in the host nucleus. It localises to the virion. The enzyme catalyses RNA(n) + a ribonucleoside 5'-triphosphate = RNA(n+1) + diphosphate. It catalyses the reaction Hydrolyzes glutaminyl bonds, and activity is further restricted by preferences for the amino acids in P6 - P1' that vary with the species of potyvirus, e.g. Glu-Xaa-Xaa-Tyr-Xaa-Gln-|-(Ser or Gly) for the enzyme from tobacco etch virus. The natural substrate is the viral polyprotein, but other proteins and oligopeptides containing the appropriate consensus sequence are also cleaved.. It carries out the reaction Hydrolyzes a Gly-|-Gly bond at its own C-terminus, commonly in the sequence -Tyr-Xaa-Val-Gly-|-Gly, in the processing of the potyviral polyprotein.. Its function is as follows. Required for aphid transmission and also has proteolytic activity. Only cleaves a Gly-Gly dipeptide at its own C-terminus. Interacts with virions and aphid stylets. Acts as a suppressor of RNA-mediated gene silencing, also known as post-transcriptional gene silencing (PTGS), a mechanism of plant viral defense that limits the accumulation of viral RNAs. May have RNA-binding activity. Functionally, has helicase activity. It may be involved in replication. Indispensable for virus replication. In terms of biological role, mediates the cap-independent, EIF4E-dependent translation of viral genomic RNAs. Binds to the cap-binding site of host EIF4E and thus interferes with the host EIF4E-dependent mRNA export and translation. VPg-RNA directly binds EIF4E and is a template for transcription. Also forms trimeric complexes with EIF4E-EIF4G, which are templates for translation. Its function is as follows. Has RNA-binding and proteolytic activities. Functionally, an RNA-dependent RNA polymerase that plays an essential role in the virus replication. Involved in aphid transmission, cell-to-cell and systemis movement, encapsidation of the viral RNA and in the regulation of viral RNA amplification. This chain is Genome polyprotein, found in Lettuce mosaic virus (strain E) (LMV).